Reading from the N-terminus, the 176-residue chain is Small ribosomal subunit protein uS5 (176 aa).

One can recognise an S5 DRBM domain in the interval 11 to 74; sequence LSEVLVDVNR…QAAKKRMMKV (64 aa).

Belongs to the universal ribosomal protein uS5 family. Part of the 30S ribosomal subunit. Contacts proteins S4 and S8.

In terms of biological role, with S4 and S12 plays an important role in translational accuracy. Its function is as follows. Located at the back of the 30S subunit body where it stabilizes the conformation of the head with respect to the body. The chain is Small ribosomal subunit protein uS5 from Rickettsia massiliae (strain Mtu5).